A 311-amino-acid chain; its full sequence is MKQQNDTQILQFLLLGLSENTELQPLIYWLFFSMYLVTVWGNLIIILATVLDFRLHTAMYFFLCNLSFVDICLISTTIPKMLANVHLNHKAITYEGCIMQIYFFTLFVGLDNFLLAVMAYDRFVAICHPLRYTSIMTPHLCMSLVLVSWIASVLNSSLQSFLVLQLSFCTEVEIPHFFCELSMLVHLACSDTFLSDMAMNVLAALLGGGCLVGILYSYSKIVSSIQAISSAEGKYKAFSTCVSHLSVVSLFYCTLLGVYLSSAVTQNSHSTAATSLMYTVVTPMLNPFIYSLRNDNIKRALKNFVKKKLEK.

Over methionine 1–proline 25 the chain is Extracellular. N-linked (GlcNAc...) asparagine glycosylation occurs at asparagine 5. The helical transmembrane segment at leucine 26 to isoleucine 46 threads the bilayer. The Cytoplasmic segment spans residues leucine 47–threonine 57. The helical transmembrane segment at alanine 58 to isoleucine 78 threads the bilayer. The Extracellular portion of the chain corresponds to proline 79–cysteine 97. Cysteines 97 and 179 form a disulfide. A helical membrane pass occupies residues isoleucine 98–methionine 118. The Cytoplasmic portion of the chain corresponds to alanine 119 to threonine 133. The helical transmembrane segment at serine 134 to leucine 154 threads the bilayer. An N-linked (GlcNAc...) asparagine glycan is attached at asparagine 155. Residues asparagine 155–aspartate 196 are Extracellular-facing. The chain crosses the membrane as a helical span at residues methionine 197–serine 217. At tyrosine 218–histidine 244 the chain is on the cytoplasmic side. A helical transmembrane segment spans residues leucine 245–threonine 265. The Extracellular portion of the chain corresponds to glutamine 266–threonine 271. A helical transmembrane segment spans residues alanine 272–leucine 292. The Cytoplasmic portion of the chain corresponds to arginine 293 to lysine 311.

The protein belongs to the G-protein coupled receptor 1 family. Tongue specific.

It localises to the cell membrane. Functionally, possible taste receptor. In Rattus norvegicus (Rat), this protein is Olfactory receptor 1073 (Olr1073).